The primary structure comprises 184 residues: NADH-dependent flavin reductase subunit 2 (184 aa).

Belongs to the NADH-dependent flavin reductase family. Requires LJ_0548 for activity, but the exact composition of the enzyme is unclear.

It carries out the reaction a reduced flavin + NAD(+) = an oxidized flavin + NADH + 2 H(+). Functionally, component of an enzyme that catalyzes the reduction of free flavins (FMN, FAD and riboflavin) by NADH; the reduced flavins produced by this reaction likely spontaneously react with oxygen, yielding hydrogen peroxide. Is responsible for the major H(2)O(2) production in L.johnsonii in the presence of oxygen. Cannot use NADPH instead of NADH as the electron donor. This Lactobacillus johnsonii (strain CNCM I-12250 / La1 / NCC 533) protein is NADH-dependent flavin reductase subunit 2 (nfr2).